A 277-amino-acid chain; its full sequence is Large ribosomal subunit protein uL2 (277 aa).

The tract at residues G222–K277 is disordered.

It belongs to the universal ribosomal protein uL2 family. In terms of assembly, part of the 50S ribosomal subunit. Forms a bridge to the 30S subunit in the 70S ribosome.

Its function is as follows. One of the primary rRNA binding proteins. Required for association of the 30S and 50S subunits to form the 70S ribosome, for tRNA binding and peptide bond formation. It has been suggested to have peptidyltransferase activity; this is somewhat controversial. Makes several contacts with the 16S rRNA in the 70S ribosome. The chain is Large ribosomal subunit protein uL2 from Bartonella quintana (strain Toulouse) (Rochalimaea quintana).